We begin with the raw amino-acid sequence, 273 residues long: Eukaryotic translation initiation factor 3 subunit G-2 (273 aa).

The RRM domain maps to 193–271; the sequence is SAVRISNLSE…LILCVEWSKP (79 aa).

Belongs to the eIF-3 subunit G family. In terms of assembly, component of the eukaryotic translation initiation factor 3 (eIF-3) complex. The eIF-3 complex interacts with pix.

It is found in the cytoplasm. Functionally, RNA-binding component of the eukaryotic translation initiation factor 3 (eIF-3) complex, which is involved in protein synthesis of a specialized repertoire of mRNAs and, together with other initiation factors, stimulates binding of mRNA and methionyl-tRNAi to the 40S ribosome. The eIF-3 complex specifically targets and initiates translation of a subset of mRNAs involved in cell proliferation. This subunit can bind 18S rRNA. The protein is Eukaryotic translation initiation factor 3 subunit G-2 of Drosophila simulans (Fruit fly).